The sequence spans 290 residues: Probable ATP-dependent kinase TDA10 (290 aa).

38 to 45 (GPQGSGKS) serves as a coordination point for ATP.

This sequence belongs to the GLYK kinase family.

The protein resides in the cytoplasm. The protein localises to the nucleus. ATP-dependent kinase whose specificity is not yet known. The polypeptide is Probable ATP-dependent kinase TDA10 (TDA10) (Saccharomyces cerevisiae (strain ATCC 204508 / S288c) (Baker's yeast)).